Reading from the N-terminus, the 531-residue chain is MPKLKVKAGKGKKGKRKKAGKNEHRLDKESEVERARSNAALWEARLKVTEFSRVEYRDAARSLAQNNEDLTKQQYKLEKDMVEVIGFLKKQDLEKDELIEKLQQNLIAQKKSAQDEREKLVELYSKQIAHLEENYSQKTNEMQIIQSEFKLMREFRRQKVELEKELDEVKESLWRANQDHKETLARMERRFFEEKQRLEKEAEKKIMMLAEKAHSEAIIQLDEARKSVFKENVRLKEAFSYHLKEMKDIKKSKKMQEDAKLHLLQEKETNDLLVQEKVSQVSQKKVQIQELQQNVKALECALERMTMEMEKDAQGKEHQALLQEQAGNVELQKLQKVLHMKEREMNRIKKLARNILEERTEVESFFLEALWQVKQEIATSRNYYRQVAQSAYTSKMIQASLGKDQYPKIRTFHNKEHSTNDVSHDLSEAEKWTHIQAGKVDIGDLTWEQKEKVLRLLFAKMNGFQSRKSPGLKPSPPADVSSIKEKEINTSNLEEKPEESSSTFITQSIPELPAPSLVLPHIQTGRCQVTG.

Over residues 1 to 19 (MPKLKVKAGKGKKGKRKKA) the composition is skewed to basic residues. Residues 1 to 32 (MPKLKVKAGKGKKGKRKKAGKNEHRLDKESEV) are disordered. Residues 20 to 32 (GKNEHRLDKESEV) are compositionally biased toward basic and acidic residues. 2 coiled-coil regions span residues 26–213 (LDKE…AEKA) and 274–365 (VQEK…VESF). Residues 465 to 505 (QSRKSPGLKPSPPADVSSIKEKEINTSNLEEKPEESSSTFI) are disordered. A compositionally biased stretch (basic and acidic residues) spans 482–499 (SIKEKEINTSNLEEKPEE).

This sequence belongs to the BBOF1 family. Multiciliated cells.

The protein localises to the cytoplasm. It localises to the cytoskeleton. It is found in the cilium basal body. In terms of biological role, basal body protein required in multiciliate cells to align and maintain cilia orientation in response to flow. May act by mediating a maturation step that stabilizes and aligns cilia orientation. Not required to respond to planar cell polarity (PCP) or flow-based orientation cues. This is Basal body-orientation factor 1 (ccdc176) from Xenopus laevis (African clawed frog).